Here is a 505-residue protein sequence, read N- to C-terminus: MASIDFRNKINWHRRYRSPQGVKTEHEILRIFESDRGRIINSPAIRRLQQKTQVFPLERNAAVRTRLTHSMEVQQVGRYIAKEILSRLKEQNRLEEYGLDALTGPFESIVEMACLMHDIGNPPFGHFGEAAINDWFRQRLHPEDAESQPLTHDRCVVSSLRLQEGEENLNDIRRKVRQDICHFEGNAQGIRLVHTLMRMNLTWAQVGGILKYTRPAWWRGPVPDSHHYLMKKPGYYLSEEKYIARLRKELQLAPYSRFPLTWIMEAADDISYCVADLEDAVEKRIFSVEQLYHHLYHAWGHHEKDSLFELVVGNAWEKSRANTLSRSTEDQFFMYLRVNTLNKLVPYAAQRFIDNLPQIFAGTFNQALLEDASGFSRLLELYKNVAVEHVFSHPDVEQLELQGYRVISGLLDIYQPLLSLSLNDFRELVEKERLKRFPIESRLFQKLSTRHRLAYVEVVSKLPTDSAEYPVLEYYYRCRLIQDYISGMTDLYAWDEYRRLMAVEQ.

Residues 66 to 273 form the HD domain; it reads RLTHSMEVQQ…MEAADDISYC (208 aa).

Belongs to the dGTPase family. Type 1 subfamily. In terms of assembly, homotetramer. It depends on Mg(2+) as a cofactor.

It carries out the reaction dGTP + H2O = 2'-deoxyguanosine + triphosphate + H(+). Functionally, dGTPase preferentially hydrolyzes dGTP over the other canonical NTPs. The protein is Deoxyguanosinetriphosphate triphosphohydrolase of Salmonella choleraesuis (strain SC-B67).